A 311-amino-acid chain; its full sequence is tRNA-cytidine(32) 2-sulfurtransferase (311 aa).

Positions 47 to 52 (SGGKDS) match the PP-loop motif motif. 3 residues coordinate [4Fe-4S] cluster: Cys-122, Cys-125, and Cys-213.

It belongs to the TtcA family. Homodimer. Mg(2+) serves as cofactor. The cofactor is [4Fe-4S] cluster.

Its subcellular location is the cytoplasm. It carries out the reaction cytidine(32) in tRNA + S-sulfanyl-L-cysteinyl-[cysteine desulfurase] + AH2 + ATP = 2-thiocytidine(32) in tRNA + L-cysteinyl-[cysteine desulfurase] + A + AMP + diphosphate + H(+). It participates in tRNA modification. Functionally, catalyzes the ATP-dependent 2-thiolation of cytidine in position 32 of tRNA, to form 2-thiocytidine (s(2)C32). The sulfur atoms are provided by the cysteine/cysteine desulfurase (IscS) system. The sequence is that of tRNA-cytidine(32) 2-sulfurtransferase from Salmonella typhimurium (strain LT2 / SGSC1412 / ATCC 700720).